Reading from the N-terminus, the 121-residue chain is Ribonuclease P protein component (121 aa).

Belongs to the RnpA family. Consists of a catalytic RNA component (M1 or rnpB) and a protein subunit.

It carries out the reaction Endonucleolytic cleavage of RNA, removing 5'-extranucleotides from tRNA precursor.. RNaseP catalyzes the removal of the 5'-leader sequence from pre-tRNA to produce the mature 5'-terminus. It can also cleave other RNA substrates such as 4.5S RNA. The protein component plays an auxiliary but essential role in vivo by binding to the 5'-leader sequence and broadening the substrate specificity of the ribozyme. This chain is Ribonuclease P protein component, found in Geobacillus kaustophilus (strain HTA426).